A 517-amino-acid chain; its full sequence is Splicing factor cactin (517 aa).

The segment covering 1–14 has biased composition (basic and acidic residues); the sequence is MAFRDSTRDFNRSR. Positions 1-59 are disordered; that stretch reads MAFRDSTRDFNRSRPEKRHASRSSSPRSFRPSNQNARANYNLPRVRDAMKEEERSRETK. Positions 22 to 32 are enriched in low complexity; sequence RSSSPRSFRPS. A compositionally biased stretch (basic and acidic residues) spans 44–59; sequence RVRDAMKEEERSRETK.

Belongs to the CACTIN family. Interacts with sde2. Interacts with cdc5.

Its function is as follows. Plays a role in pre-mRNA splicing by facilitating excision of introns featuring long spacing between the branchpoint and 3'-splice site (ss). Recruited to the spliceosome by sde2, which may enable folding of the RNA between the BP and 3'-ss to guide the splice site towards the spliceosome's catalytic center. Assists the splicing of several components involved in chromatin organization. This Schizosaccharomyces pombe (strain 972 / ATCC 24843) (Fission yeast) protein is Splicing factor cactin.